A 471-amino-acid chain; its full sequence is Tyrosine--tRNA ligase (471 aa).

Residue Tyr-41 participates in L-tyrosine binding. A 'HIGH' region motif is present at residues 46-55 (PTAPSLHVGN). L-tyrosine is bound by residues Tyr-176 and Gln-180. A 'KMSKS' region motif is present at residues 236–240 (KFGKT). Lys-239 is an ATP binding site. One can recognise an S4 RNA-binding domain in the interval 403 to 471 (DLITHILQKV…GKKHLAAVFY (69 aa)).

This sequence belongs to the class-I aminoacyl-tRNA synthetase family. TyrS type 1 subfamily. As to quaternary structure, homodimer.

The protein resides in the cytoplasm. The catalysed reaction is tRNA(Tyr) + L-tyrosine + ATP = L-tyrosyl-tRNA(Tyr) + AMP + diphosphate + H(+). Catalyzes the attachment of tyrosine to tRNA(Tyr) in a two-step reaction: tyrosine is first activated by ATP to form Tyr-AMP and then transferred to the acceptor end of tRNA(Tyr). The chain is Tyrosine--tRNA ligase from Tropheryma whipplei (strain Twist) (Whipple's bacillus).